The primary structure comprises 169 residues: Ribosome maturation factor RimM (169 aa).

The 77-residue stretch at 91–167 folds into the PRC barrel domain; the sequence is EGEYYFADLI…RIVIATDFAH (77 aa).

It belongs to the RimM family. In terms of assembly, binds ribosomal protein uS19.

The protein resides in the cytoplasm. In terms of biological role, an accessory protein needed during the final step in the assembly of 30S ribosomal subunit, possibly for assembly of the head region. Essential for efficient processing of 16S rRNA. May be needed both before and after RbfA during the maturation of 16S rRNA. It has affinity for free ribosomal 30S subunits but not for 70S ribosomes. This is Ribosome maturation factor RimM from Erythrobacter litoralis (strain HTCC2594).